The sequence spans 336 residues: Holliday junction branch migration complex subunit RuvB (336 aa).

The large ATPase domain (RuvB-L) stretch occupies residues 1–182 (MKERIVNLET…FGMSFRMQFY (182 aa)). ATP contacts are provided by residues L21, R22, G63, K66, T67, S68, 129 to 131 (EDF), R172, Y182, and R219. Residue T67 participates in Mg(2+) binding. The interval 183 to 253 (SPSELALIIK…ITLHALNELG (71 aa)) is small ATPAse domain (RuvB-S). A head domain (RuvB-H) region spans residues 256 to 336 (ELGFDEADLA…IPTLKSQTLF (81 aa)). DNA-binding residues include R310 and R315.

It belongs to the RuvB family. As to quaternary structure, homohexamer. Forms an RuvA(8)-RuvB(12)-Holliday junction (HJ) complex. HJ DNA is sandwiched between 2 RuvA tetramers; dsDNA enters through RuvA and exits via RuvB. An RuvB hexamer assembles on each DNA strand where it exits the tetramer. Each RuvB hexamer is contacted by two RuvA subunits (via domain III) on 2 adjacent RuvB subunits; this complex drives branch migration. In the full resolvosome a probable DNA-RuvA(4)-RuvB(12)-RuvC(2) complex forms which resolves the HJ.

The protein resides in the cytoplasm. The catalysed reaction is ATP + H2O = ADP + phosphate + H(+). The RuvA-RuvB-RuvC complex processes Holliday junction (HJ) DNA during genetic recombination and DNA repair, while the RuvA-RuvB complex plays an important role in the rescue of blocked DNA replication forks via replication fork reversal (RFR). RuvA specifically binds to HJ cruciform DNA, conferring on it an open structure. The RuvB hexamer acts as an ATP-dependent pump, pulling dsDNA into and through the RuvAB complex. RuvB forms 2 homohexamers on either side of HJ DNA bound by 1 or 2 RuvA tetramers; 4 subunits per hexamer contact DNA at a time. Coordinated motions by a converter formed by DNA-disengaged RuvB subunits stimulates ATP hydrolysis and nucleotide exchange. Immobilization of the converter enables RuvB to convert the ATP-contained energy into a lever motion, pulling 2 nucleotides of DNA out of the RuvA tetramer per ATP hydrolyzed, thus driving DNA branch migration. The RuvB motors rotate together with the DNA substrate, which together with the progressing nucleotide cycle form the mechanistic basis for DNA recombination by continuous HJ branch migration. Branch migration allows RuvC to scan DNA until it finds its consensus sequence, where it cleaves and resolves cruciform DNA. In Helicobacter pylori (strain G27), this protein is Holliday junction branch migration complex subunit RuvB.